A 219-amino-acid chain; its full sequence is Ribose-5-phosphate isomerase A (219 aa).

Substrate is bound by residues 28–31 (TGST), 81–84 (DGAD), and 94–97 (KGGG). Glu-103 acts as the Proton acceptor in catalysis. Lys-121 contacts substrate.

Belongs to the ribose 5-phosphate isomerase family. As to quaternary structure, homodimer.

It catalyses the reaction aldehydo-D-ribose 5-phosphate = D-ribulose 5-phosphate. The protein operates within carbohydrate degradation; pentose phosphate pathway; D-ribose 5-phosphate from D-ribulose 5-phosphate (non-oxidative stage): step 1/1. Functionally, catalyzes the reversible conversion of ribose-5-phosphate to ribulose 5-phosphate. The chain is Ribose-5-phosphate isomerase A from Shewanella sp. (strain ANA-3).